We begin with the raw amino-acid sequence, 1356 residues long: Pleckstrin homology domain-containing family H member 1 (1356 aa).

Residues 27–172 (FRLQASKIRE…QDALEDLRMT (146 aa)) adopt a coiled-coil conformation. Disordered regions lie at residues 179–203 (VVPEGTPERDPVPSGPSDQPVEQDS), 256–314 (HLQK…PKVR), and 354–414 (LHSP…PPLH). Composition is skewed to polar residues over residues 194-203 (PSDQPVEQDS), 256-265 (HLQKEGSPSQ), and 285-297 (VTAQGGTFPGTKT). Residues 359–407 (SSKSEARAKVREEAEKMEMEALPPSGKQEERESLKSRRGELEDVELENK) are a coiled coil. 2 stretches are compositionally biased toward basic and acidic residues: residues 362-377 (SEARAKVREEAEKMEM) and 385-399 (KQEERESLKSRRGEL). S451 is modified (phosphoserine). 2 PH domains span residues 572–666 (ALEK…SLLK) and 681–790 (KPTV…VAAG). S739 carries the phosphoserine modification. Residues 826-980 (YSQEGLCASL…PSRMEVVSIL (155 aa)) enclose the MyTH4 domain. An FERM domain is found at 991-1327 (FSIPVHFANG…NHCSATVNLS (337 aa)).

The sequence is that of Pleckstrin homology domain-containing family H member 1 (Plekhh1) from Mus musculus (Mouse).